Consider the following 206-residue polypeptide: Recombination protein RecR (206 aa).

A C4-type zinc finger spans residues 58 to 73; it reads CENCHNISDVAVCEIC. A Toprim domain is found at 81 to 176; it reads QIVCVVEDVR…ITSSIARGIS (96 aa).

Belongs to the RecR family.

Its function is as follows. May play a role in DNA repair. It seems to be involved in an RecBC-independent recombinational process of DNA repair. It may act with RecF and RecO. The polypeptide is Recombination protein RecR (Flavobacterium psychrophilum (strain ATCC 49511 / DSM 21280 / CIP 103535 / JIP02/86)).